The chain runs to 399 residues: MIIKPRIRGFICVTAHPAGCKANVEKQIEYVTAQGAITSGPKKVLVIGASTGYGLAARISAAFGCNADTLGVFFERAGEENKPATAGWYNSAAFEELATAKGLYANSINGDAYSDAVKQKTIETIRQDLGQVDLVVYSLAAPRRTHPKTGEVFNSTLKPIGKPLTTRGLNTDKETITDVSLEPASAEEIEGTVAVMGGEDWQMWIDALLEAGVLAEGAKTTAFTYLGEKITHDIYWNGSIGEAKKDLDKRVLTIRDTLAAHGNGDARVSVLKAVVTQASSAIPVMPLYLSLLFKVMKEKGTHEGCIEQVYGLFKDSLYNAAPIVDETGRLRADYKELQPEVQDEVSALWPTVTNENLNQLTDFVGYKKEFMHLFGFGLEGVDYDADVNPDVKIKNLVQM.

NAD(+) is bound by residues 48 to 53, 74 to 75, 111 to 112, and 139 to 140; these read GASTGY, FE, DA, and LA. Y225 is a binding site for substrate. The active-site Proton donor is Y235. NAD(+) is bound by residues K244 and 274–276; that span reads VVT.

It belongs to the TER reductase family. Monomer.

It catalyses the reaction a 2,3-saturated acyl-[ACP] + NAD(+) = a (2E)-enoyl-[ACP] + NADH + H(+). Its pathway is lipid metabolism; fatty acid biosynthesis. Involved in the final reduction of the elongation cycle of fatty acid synthesis (FAS II). Catalyzes the reduction of a carbon-carbon double bond in an enoyl moiety that is covalently linked to an acyl carrier protein (ACP). The polypeptide is Enoyl-[acyl-carrier-protein] reductase [NADH] (Erwinia tasmaniensis (strain DSM 17950 / CFBP 7177 / CIP 109463 / NCPPB 4357 / Et1/99)).